The sequence spans 332 residues: Potassium channel subfamily K member 17 (332 aa).

Residues 1–20 (MYRPRARAAPEGRVRGCAVP) are Cytoplasmic-facing. The helical transmembrane segment at 21–43 (STVLLLLAYLAYLALGTGVFWTL) threads the bilayer. N-linked (GlcNAc...) asparagine glycans are attached at residues Asn65 and Asn94. Positions 106 to 124 (SFFFSVSTITTIGYGNLSP) form an intramembrane region, pore-forming. K(+) contacts are provided by Thr116, Ile117, Gly118, and Tyr119. A selectivity filter 1 region spans residues 116–121 (TIGYGN). A helical membrane pass occupies residues 128-148 (AARLFCIFFALVGIPLNLVVL). The Cytoplasmic portion of the chain corresponds to 149–179 (NRLGHLMQQGVNHWASRLGGTWQDPDKARWL). The chain crosses the membrane as a helical span at residues 180-200 (AGSGALLSGLLLFLLLPPLLF). The pore-forming intramembrane region spans 211–230 (GFYFAFITLSTVGFGDYVIG). Residues Thr221, Val222, Gly223, and Phe224 each contribute to the K(+) site. Residues 221–226 (TVGFGD) are selectivity filter 2. The helical transmembrane segment at 244–264 (MVSLWILFGMAWLALIIKLIL) threads the bilayer. The Cytoplasmic segment spans residues 265–332 (SQLETPGRVC…AHAAGCGKDS (68 aa)). A disordered region spans residues 287-312 (SQSWRQGPDREPESHSPQQGCYPEGP).

The protein belongs to the two pore domain potassium channel (TC 1.A.1.8) family. As to quaternary structure, homodimer; disulfide-linked. Heterodimer with KCNK5 and KCNK16. Widely expressed. Highly expressed in aorta and coronary artery. Expressed in pancreas, in both endocrine (alpha, beta, gamma, delta, and epsilon) and exocrine (acinar and ductal) cells.

The protein resides in the cell membrane. It catalyses the reaction K(+)(in) = K(+)(out). The enzyme catalyses Rb(+)(in) = Rb(+)(out). The catalysed reaction is Cs(+)(in) = Cs(+)(out). Inhibited by Ba(2+), quinidine, chloroform and halothane. Activated at alkaline pH. Activated by quinine and isoflurane. In terms of biological role, k(+) channel that conducts voltage-dependent outward rectifying currents upon membrane depolarization. Voltage sensing is coupled to K(+) electrochemical gradient in an 'ion flux gating' mode where outward but not inward ion flow opens the gate. Homo- and heterodimerizes to form functional channels with distinct regulatory and gating properties. Present in the cardiac conduction system where it may regulate action potential duration and beating frequency of cardiac myocytes. Permeable to other monovalent cations such as Rb(+) and Cs(+). In Homo sapiens (Human), this protein is Potassium channel subfamily K member 17.